The sequence spans 187 residues: Accessory gene regulator protein B (187 aa).

5 helical membrane passes run 49–69 (ISIF…YMLI), 82–102 (ILCY…LINI), 106–126 (FTYL…YAPA), 144–164 (LSII…PFYA), and 166–186 (FMLL…FPKE).

This sequence belongs to the AgrB family.

It localises to the cell membrane. Functionally, essential for the production of a quorum sensing system signal molecule, the autoinducing peptide (AIP). This quorum sensing system is responsible for the regulation of the expression of virulence factor genes. Involved in the proteolytic processing of AgrD, the precursor of AIP. This Staphylococcus aureus (strain Mu50 / ATCC 700699) protein is Accessory gene regulator protein B.